A 291-amino-acid polypeptide reads, in one-letter code: Porphobilinogen deaminase (291 aa).

C233 is subject to S-(dipyrrolylmethanemethyl)cysteine.

It belongs to the HMBS family. Monomer. Dipyrromethane serves as cofactor.

The enzyme catalyses 4 porphobilinogen + H2O = hydroxymethylbilane + 4 NH4(+). It functions in the pathway porphyrin-containing compound metabolism; protoporphyrin-IX biosynthesis; coproporphyrinogen-III from 5-aminolevulinate: step 2/4. In terms of biological role, tetrapolymerization of the monopyrrole PBG into the hydroxymethylbilane pre-uroporphyrinogen in several discrete steps. In Ruminiclostridium josui (Clostridium josui), this protein is Porphobilinogen deaminase (hemC).